A 299-amino-acid polypeptide reads, in one-letter code: Taste receptor type 2 member 1 (299 aa).

Topologically, residues 1 to 9 are extracellular; it reads MLESHLIIY. Residues 10–30 traverse the membrane as a helical segment; that stretch reads FLLAVIQFLLGTFTNGIIVVV. The Cytoplasmic segment spans residues 31 to 55; that stretch reads NGIDLIKHRKMAPLDLLLSCLAVSR. A helical transmembrane segment spans residues 56–76; the sequence is IFLQLFIFYINVVVIFLIEFI. The Extracellular portion of the chain corresponds to 77 to 81; the sequence is TCSAS. A helical membrane pass occupies residues 82-102; it reads CAFLVFVNELELWLATWLGVF. The Cytoplasmic segment spans residues 103 to 124; the sequence is YCAKVASVLHPLFIWLKMRISK. Residues 125–145 traverse the membrane as a helical segment; it reads SVPWMILGSLLYVSMICIFHI. The Extracellular portion of the chain corresponds to 146 to 178; sequence KYTGFMVPYFLRNLFFQNATIQTEVKQAIQIFS. The N-linked (GlcNAc...) asparagine glycan is linked to asparagine 163. Residues 179–199 traverse the membrane as a helical segment; sequence FVAELLVPLLIFLVAVLLLIF. Residues 200–222 are Cytoplasmic-facing; it reads SLGRHTRQMRNTVAGSRVPGRGA. The chain crosses the membrane as a helical span at residues 223–243; it reads HISALLSILSFLILYISHYLI. At 244–257 the chain is on the extracellular side; the sequence is KTFLSSLKFHVKRF. The helical transmembrane segment at 258-278 threads the bilayer; it reads VFLFCILVIGTYPSGHSLILI. The Cytoplasmic portion of the chain corresponds to 279 to 299; that stretch reads LGNPKLKQNTKKFLCHSKCCQ.

The protein belongs to the G-protein coupled receptor T2R family.

It localises to the membrane. Its function is as follows. Receptor that may play a role in the perception of bitterness and is gustducin-linked. May play a role in sensing the chemical composition of the gastrointestinal content. The activity of this receptor may stimulate alpha gustducin, mediate PLC-beta-2 activation and lead to the gating of TRPM5. This is Taste receptor type 2 member 1 (TAS2R1) from Chlorocebus aethiops (Green monkey).